The sequence spans 395 residues: MWLPRVSSTAVTALLLAQTFLLLFLVSRPGPSSPAGGEARVHVLVLSSWRSGSSFVGQLFNQHPDVFYLMEPAWHVWTTLSQGSAATLHMAVRDLVRSVFLCDMDVFDAYLPWRRNLSDLFQWAVSRALCSPPACSAFPRGAISSEAVCKPLCARQSFTLAREACRSYSHVVLKEVRFFNLQVLYPLLSDPALNLRIVHLVRDPRAVLRSREQTAKALARDNGIVLGTNGTWVEADPGLRVVREVCRSHVRIAEAATLKPPPFLRGRYRLVRFEDLAREPLAEIRALYAFTGLSLTPQLEAWIHNITHGSGPGARREAFKTSSRNALNVSQAWRHALPFAKIRRVQELCAGALQLLGYRPVYSEDEQRNLALDLVLPRGLNGFTWASSTASHPRN.

Topologically, residues 1–5 are cytoplasmic; sequence MWLPR. Residues 6 to 26 traverse the membrane as a helical; Signal-anchor for type II membrane protein segment; the sequence is VSSTAVTALLLAQTFLLLFLV. Over 27 to 395 the chain is Lumenal; sequence SRPGPSSPAG…ASSTASHPRN (369 aa). 49 to 55 serves as a coordination point for 3'-phosphoadenylyl sulfate; the sequence is WRSGSSF. The N-linked (GlcNAc...) asparagine glycan is linked to N116. 202–210 is a 3'-phosphoadenylyl sulfate binding site; the sequence is RDPRAVLRS. Residues N229, N305, and N328 are each glycosylated (N-linked (GlcNAc...) asparagine).

Belongs to the sulfotransferase 1 family. Gal/GlcNAc/GalNAc subfamily. Expressed in cornea. Mainly expressed in brain. Also expressed in spinal cord and trachea.

The protein resides in the golgi apparatus membrane. It carries out the reaction 3'-phosphoadenylyl sulfate + keratan = adenosine 3',5'-bisphosphate + keratan 6'-sulfate.. Its function is as follows. Sulfotransferase that utilizes 3'-phospho-5'-adenylyl sulfate (PAPS) as sulfonate donor to catalyze the transfer of sulfate to position 6 of non-reducing N-acetylglucosamine (GlcNAc) residues of keratan. Cooperates with B4GALT4 galactosyltransferase and B3GNT7 N-acetylglucosaminyltransferase to construct and elongate the sulfated disaccharide unit [-&gt;3Galbeta1-&gt;4(6-sulfoGlcNAcbeta)1-&gt;] within keratan sulfate polymer. Involved in biosynthesis of keratan sulfate in cornea, with an impact on proteoglycan fibril organization and corneal transparency. Involved in sulfation of endothelial mucins such as GLYCAM1. In Homo sapiens (Human), this protein is Carbohydrate sulfotransferase 6.